Consider the following 485-residue polypeptide: Tektin-5 (485 aa).

4 coiled-coil regions span residues 113 to 185 (SRLT…EVNC), 225 to 251 (QQQM…ALER), 342 to 385 (FNAR…MAKE), and 423 to 443 (DDTL…LQLL).

The protein belongs to the tektin family. In terms of assembly, microtubule inner protein component of sperm flagellar doublet microtubules. Interacts with TEKT3. In terms of processing, ubiquitinated, leading to its degradation. Deubiquitinated by USP16, promoting its stability.

The protein resides in the cytoplasm. Its subcellular location is the cytoskeleton. The protein localises to the flagellum axoneme. Its function is as follows. Sperm-specific microtubule inner protein (MIP) part of the dynein-decorated doublet microtubules (DMTs) in flagellar axoneme. Forms an extensive interaction network in different conformations that reinforces the helix bundle composed by other tektin proteins (TEKT1 to TEKT4) and MIPs to anchor the tektin bundle onto the tubulin wall of A-tubule of the sperm flagellum. This chain is Tektin-5 (TEKT5), found in Macaca fascicularis (Crab-eating macaque).